Here is a 90-residue protein sequence, read N- to C-terminus: Acylphosphatase (90 aa).

The Acylphosphatase-like domain maps to 3–89 (ALKIRVEGIV…EGYEDFTIKY (87 aa)). Residues arginine 18 and asparagine 36 contribute to the active site.

The protein belongs to the acylphosphatase family.

It carries out the reaction an acyl phosphate + H2O = a carboxylate + phosphate + H(+). In Thermotoga maritima (strain ATCC 43589 / DSM 3109 / JCM 10099 / NBRC 100826 / MSB8), this protein is Acylphosphatase (acyP).